Reading from the N-terminus, the 264-residue chain is NAD kinase 1 (264 aa).

The active-site Proton acceptor is Asp-45. NAD(+) is bound by residues Asp-45–Gly-46, Gly-46, Asn-122–Glu-123, Arg-148, Asp-150, Ser-158, Thr-161–Ser-166, and His-223.

It belongs to the NAD kinase family. As to quaternary structure, homotetramer. The cofactor is a divalent metal cation.

It localises to the cytoplasm. The enzyme catalyses NAD(+) + ATP = ADP + NADP(+) + H(+). Its activity is regulated as follows. Competitively inhibited by 5'-thioacetyladenosine (TAA) and di-(5'-thioadenosine) (DTA). Its function is as follows. Involved in the regulation of the intracellular balance of NAD and NADP, and is a key enzyme in the biosynthesis of NADP. Catalyzes specifically the phosphorylation on 2'-hydroxyl of the adenosine moiety of NAD to yield NADP. This is NAD kinase 1 from Listeria monocytogenes serovar 1/2a (strain ATCC BAA-679 / EGD-e).